Consider the following 208-residue polypeptide: MKGLFVTIEGPEGSGKTTLIQGLLPYFEQKEQKVMATREPGGIAISEDIRTILHKQEYTMMEARTEALLYAAARRQHLVEKVMPALDEDYLVLCDRFIDSSLAYQGYARGLGMDKVFEINRFATEDCMPSLTIYLDIEPEVGLARIAKDAGREVNRLDMEDITFHKRVREGYLQVVERFSDRIVLVNADQPMEKLIEEVIQVIEDKLL.

An ATP-binding site is contributed by 10–17; it reads GPEGSGKT.

The protein belongs to the thymidylate kinase family.

The enzyme catalyses dTMP + ATP = dTDP + ADP. Phosphorylation of dTMP to form dTDP in both de novo and salvage pathways of dTTP synthesis. The sequence is that of Thymidylate kinase from Bacillus cereus (strain ATCC 10987 / NRS 248).